We begin with the raw amino-acid sequence, 281 residues long: MTKYTNADELKSLTLGQKTEYKHSYEPELLQAVPRSLNRDDLALGDELPFVGCDVWTLYELSWLNQNGLPQVAIGDVVLPATSPNLVESKSFKLYLNSFNQTKFSSWEDVTSTLIKDLSVCAGEEVMVNIHPVQAYSQQPIVDMQGECIDNQDIVIDSYEFDANYLESSTSEKMVNEVLHSHLLKSNCLITNQPDWGSVEINYEGNKIDHEKLLRYLISFRQHNEFHEQCVERIYTDIMKFCSPKSLTVFARYTRRGGLDINPFRSSHLIKPEHNLRLARQ.

87-89 lines the substrate pocket; that stretch reads VES. 89–90 serves as a coordination point for NADPH; sequence SK. The Thioimide intermediate role is filled by Cys-188. Asp-195 acts as the Proton donor in catalysis. 227–228 is a binding site for substrate; sequence HE. 256–257 is a binding site for NADPH; it reads RG.

Belongs to the GTP cyclohydrolase I family. QueF type 2 subfamily. Homodimer.

It is found in the cytoplasm. It catalyses the reaction 7-aminomethyl-7-carbaguanine + 2 NADP(+) = 7-cyano-7-deazaguanine + 2 NADPH + 3 H(+). It participates in tRNA modification; tRNA-queuosine biosynthesis. Its function is as follows. Catalyzes the NADPH-dependent reduction of 7-cyano-7-deazaguanine (preQ0) to 7-aminomethyl-7-deazaguanine (preQ1). The polypeptide is NADPH-dependent 7-cyano-7-deazaguanine reductase (Aliivibrio salmonicida (strain LFI1238) (Vibrio salmonicida (strain LFI1238))).